The following is a 135-amino-acid chain: MFARLTSTLFALAAVSAVFAAPGATTEQCNGGEVQCCNSVQDANNLDSSVKKIITGLLHLDLKQITGQVGVTCTSVNVLGIGGGSSWYGFAFSYSYILASDWAIGVCSTQQKVCCTNNSFHGLIALGCTPINVSV.

A signal peptide spans 1 to 20; the sequence is MFARLTSTLFALAAVSAVFA. 4 disulfide bridges follow: C29–C114, C36–C107, C37–C73, and C115–C128. Residues N117 and N132 are each glycosylated (N-linked (GlcNAc...) asparagine).

The protein belongs to the fungal hydrophobin family. Self-assembles to form functional amyloid fibrils called rodlets. Self-assembly into fibrillar rodlets occurs spontaneously at hydrophobic:hydrophilic interfaces and the rodlets further associate laterally to form amphipathic monolayers.

The protein resides in the secreted. It is found in the cell wall. Aerial growth, conidiation, and dispersal of filamentous fungi in the environment rely upon a capability of their secreting small amphipathic proteins called hydrophobins (HPBs) with low sequence identity. Class I can self-assemble into an outermost layer of rodlet bundles on aerial cell surfaces, conferring cellular hydrophobicity that supports fungal growth, development and dispersal; whereas Class II form highly ordered films at water-air interfaces through intermolecular interactions but contribute nothing to the rodlet structure. This chain is Class I hydrophobin 2, found in Coprinopsis cinerea (strain Okayama-7 / 130 / ATCC MYA-4618 / FGSC 9003) (Inky cap fungus).